Reading from the N-terminus, the 1433-residue chain is Probable ATP-dependent RNA helicase spindle-E (1433 aa).

In terms of domain architecture, Helicase ATP-binding spans 126–294; the sequence is INAINENPVV…FANERSAPPV (169 aa). Residue 139–146 participates in ATP binding; the sequence is GETGCGKT. The short motif at 240 to 243 is the DEAH box element; sequence DEVH. One can recognise a Helicase C-terminal domain in the interval 355 to 526; the sequence is TGKSYNQSLR…NCVLKAKELK (172 aa). A Tudor domain is found at 935–998; sequence AGAITKGLML…RLMSQDLLRH (64 aa).

The protein belongs to the DEAD box helicase family. DEAH subfamily.

The protein resides in the cytoplasm. The catalysed reaction is ATP + H2O = ADP + phosphate + H(+). In terms of biological role, probable ATP-binding RNA helicase which plays a central role during spermatogenesis and oogenesis by repressing transposable elements and preventing their mobilization, which is essential for the germline integrity. Acts via the piRNA metabolic process, which mediates the repression of transposable elements during meiosis by forming complexes composed of piRNAs and Piwi and govern the methylation and subsequent repression of transposons. Involved in the repression of LTR retrotransposon copia. Also involved in telomere regulation by repressing specialized telomeric retroelements HeT-A, TAHRE, and TART; Drosophila telomeres being maintained by transposition of specialized telomeric retroelements. Involved in telomeric trans-silencing, a repression mechanism by which a transposon or a transgene inserted in subtelomeric heterochromatin has the capacity to repress in trans in the female germline, a homologous transposon, or transgene located in euchromatin. Involved in the repression of testis-expressed Stellate genes by the homologous Su(Ste) repeats. Required for anteroposterior and dorsoventral axis formation during oogenesis. The chain is Probable ATP-dependent RNA helicase spindle-E (spn-E) from Drosophila pseudoobscura pseudoobscura (Fruit fly).